The following is a 489-amino-acid chain: Long chain base biosynthesis protein 2a (489 aa).

A helical membrane pass occupies residues 2 to 22 (ITIPYLTAVSTYFSYGLLFAF). The residue at position 311 (Lys311) is an N6-(pyridoxal phosphate)lysine.

It belongs to the class-II pyridoxal-phosphate-dependent aminotransferase family. Heterodimer with LCB1. Component of the serine palmitoyltransferase (SPT) complex, composed of LCB1 and LCB2 (LCB2a or LCB2b). Pyridoxal 5'-phosphate serves as cofactor. As to expression, ubiquitous. Detected in leaves, roots, stems, flowers and at a lower level in mature seeds.

The protein resides in the endoplasmic reticulum membrane. The catalysed reaction is L-serine + hexadecanoyl-CoA + H(+) = 3-oxosphinganine + CO2 + CoA. Its pathway is lipid metabolism; sphingolipid metabolism. In terms of biological role, serine palmitoyltransferase (SPT). The heterodimer formed with LCB1 constitutes the catalytic core. Involved in the regulation of the programmed cell death (PCD) signaling pathway. Plays an important role during male gametogenesis and embryogenesis. In Arabidopsis thaliana (Mouse-ear cress), this protein is Long chain base biosynthesis protein 2a (LCB2a).